Reading from the N-terminus, the 382-residue chain is 2-carboxy-1,4-naphthoquinone phytyltransferase, chloroplastic (382 aa).

The N-terminal 66 residues, 1-66, are a transit peptide targeting the chloroplast; that stretch reads MVNFVSLCDI…RRNLRVRPIF (66 aa). Transmembrane regions (helical) follow at residues 99–119, 123–143, 168–188, 196–216, 224–244, 257–277, 323–343, and 361–381; these read VALVPLTVGASAAYLETGLFL, YVTLLLSSILIITWLNLSNDV, TLAAAITSLALGVSGLVWTSL, ILLLASAILCGYVYQCPPFRL, PLCFAAFGPFATTAFYLLLGS, VLSSSVLVGFTTSLILFCSHF, ILPLPCTLMCFLTLPVGNLVS, and YYCVRLHALLGAALSLGLVIA.

The protein belongs to the MenA family. Type 2 subfamily.

Its subcellular location is the plastid. It localises to the chloroplast membrane. The enzyme catalyses 2-carboxy-1,4-naphthoquinone + phytyl diphosphate + H(+) = demethylphylloquinone + CO2 + diphosphate. Involved in the synthesis of phylloquinone (vitamin K1). Catalyzes the transfer of a prenyl chain to 2-carboxy-1,4-naphthoquinone. This chain is 2-carboxy-1,4-naphthoquinone phytyltransferase, chloroplastic (ABC4), found in Arabidopsis thaliana (Mouse-ear cress).